The following is a 114-amino-acid chain: Early 4 ORF4 protein (114 aa).

A Nuclear localization signal motif is present at residues 66-75 (RAKRRDRRRR).

This sequence belongs to the adenoviridae E4 ORF4 family. Interacts with host BAZ1A/ACF1, host PPP2R2A/PP2a-B55alpha subunit, and host PPP2R5E/PP2a-B'B56 subunit. May interact with host SRC. Post-translationally, may be phosphorylated by host SRC kinase.

It localises to the host nucleus. The protein resides in the host cytoplasm. In terms of biological role, plays a role in viral alternative pre-mRNA splicing. Activates dephosphorylation by protein phosphatase 2A of host SR proteins and converts their splicing properties. When expressed alone ex vivo, induces p53/TP53-independent apoptosis called cytoplasmic death. May mimic nutrient/growth signals to activate the host mTOR pathway. The chain is Early 4 ORF4 protein from Homo sapiens (Human).